The chain runs to 280 residues: Phospholipase C D (280 aa).

The segment at 258-280 (VPDPQIMPTQETTPTRGIPSGPC) is disordered.

The protein belongs to the bacterial phospholipase C family.

The protein resides in the secreted. Its subcellular location is the cell wall. The catalysed reaction is a 1,2-diacyl-sn-glycero-3-phosphocholine + H2O = phosphocholine + a 1,2-diacyl-sn-glycerol + H(+). It catalyses the reaction 1,2-dihexadecanoyl-sn-glycero-3-phosphocholine + H2O = 1,2-dihexadecanoyl-sn-glycerol + phosphocholine + H(+). Its function is as follows. Involved in virulence. Induces cytotoxic effects on mouse macrophage cell lines, via direct or indirect enzymatic hydrolysis of cell membrane phospholipids. Hydrolyzes phosphatidylcholine. Does not have hemolytic activity. This chain is Phospholipase C D, found in Mycobacterium tuberculosis (strain ATCC 25618 / H37Rv).